A 31-amino-acid chain; its full sequence is Cycloviolacin-O23 (31 aa).

The segment at residues 1-31 is a cross-link (cyclopeptide (Gly-Asn)); it reads GLPTCGETCFGGTCNTPGCTCDSSWPICTHN. Intrachain disulfides connect cysteine 5–cysteine 19, cysteine 9–cysteine 21, and cysteine 14–cysteine 28.

In terms of processing, this is a cyclic peptide. Expressed in leaves but not in petals, petioles, roots and runners (at protein level).

Probably participates in a plant defense mechanism. The polypeptide is Cycloviolacin-O23 (Viola odorata (Sweet violet)).